The sequence spans 178 residues: Small ribosomal subunit protein uS5 (178 aa).

Positions 15 to 78 (FEEKIIEIRR…SAAKRNIVEV (64 aa)) constitute an S5 DRBM domain.

Belongs to the universal ribosomal protein uS5 family. As to quaternary structure, part of the 30S ribosomal subunit. Contacts proteins S4 and S8.

In terms of biological role, with S4 and S12 plays an important role in translational accuracy. Located at the back of the 30S subunit body where it stabilizes the conformation of the head with respect to the body. The chain is Small ribosomal subunit protein uS5 from Thermotoga maritima (strain ATCC 43589 / DSM 3109 / JCM 10099 / NBRC 100826 / MSB8).